The sequence spans 546 residues: Chaperonin GroEL 2 (546 aa).

Residues 30–33, Lys51, 87–91, Gly415, and Asp495 each bind ATP; these read TLGP and DGTTT.

Belongs to the chaperonin (HSP60) family. Forms a cylinder of 14 subunits composed of two heptameric rings stacked back-to-back. Interacts with the co-chaperonin GroES.

The protein localises to the cytoplasm. The enzyme catalyses ATP + H2O + a folded polypeptide = ADP + phosphate + an unfolded polypeptide.. Together with its co-chaperonin GroES, plays an essential role in assisting protein folding. The GroEL-GroES system forms a nano-cage that allows encapsulation of the non-native substrate proteins and provides a physical environment optimized to promote and accelerate protein folding. The polypeptide is Chaperonin GroEL 2 (Burkholderia cenocepacia (strain HI2424)).